We begin with the raw amino-acid sequence, 40 residues long: Peroxisomal LYS1 stabilizing protein 1 (40 aa).

Positions 1–10 (MTAKTKQSWN) are enriched in polar residues. The interval 1 to 20 (MTAKTKQSWNKGIWENGKQG) is disordered.

Its subcellular location is the cytoplasm. It localises to the cytosol. It is found in the peroxisome matrix. Functionally, modulates the lysine biosynthesis pathway, possibly by stabilizing the lysine biosynthesis LYS1 protein in lysine-deplete conditions. This is Peroxisomal LYS1 stabilizing protein 1 from Saccharomyces cerevisiae (strain ATCC 204508 / S288c) (Baker's yeast).